Consider the following 317-residue polypeptide: Mitochondrial thiamine pyrophosphate carrier 1 (317 aa).

The next 6 helical transmembrane spans lie at 21 to 41, 86 to 106, 122 to 142, 176 to 196, 207 to 227, and 281 to 300; these read AVSG…ARSV, VPAS…YAWL, LAVG…LDLL, GGAW…GIYE, LPWL…AAVF, and GLTM…LWVY. Solcar repeat units lie at residues 22–109, 116–201, and 206–306; these read VSGL…LNTA, PPQA…CTIA, and GLPW…CLRL.

It belongs to the mitochondrial carrier (TC 2.A.29) family.

It is found in the mitochondrion inner membrane. Mitochondrial transporter that mediates uptake of thiamine pyrophosphate (ThPP) into mitochondria. This Eremothecium gossypii (strain ATCC 10895 / CBS 109.51 / FGSC 9923 / NRRL Y-1056) (Yeast) protein is Mitochondrial thiamine pyrophosphate carrier 1 (TPC1).